Reading from the N-terminus, the 30-residue chain is Kalata-B16 (30 aa).

Residues 1-30 constitute a cross-link (cyclopeptide (Gly-Asp)); sequence GIPCAESCVYIPCTITALLGCKCQDKVCYD. Disulfide bonds link Cys-4–Cys-21, Cys-8–Cys-23, and Cys-13–Cys-28.

Post-translationally, this is a cyclic peptide.

Probably participates in a plant defense mechanism. This is Kalata-B16 from Oldenlandia affinis.